We begin with the raw amino-acid sequence, 410 residues long: Sensor-like histidine kinase SenX3 (410 aa).

Helical transmembrane passes span 6–26 and 46–66; these read ALLL…AVGM and ITVS…AAVV. Positions 164–380 constitute a Histidine kinase domain; it reads NVSHELKTPV…TFTLALPALI (217 aa). Residue His167 is modified to Phosphohistidine; by autocatalysis. Residues 385–410 form a disordered region; the sequence is DDERPEQAREPELRSNRSQREEELSR.

Autophosphorylated.

It is found in the cell membrane. It catalyses the reaction ATP + protein L-histidine = ADP + protein N-phospho-L-histidine.. Its function is as follows. Member of the two-component regulatory system SenX3/RegX3. Autophosphorylates, and then transfers the phosphate group to RegX3. The chain is Sensor-like histidine kinase SenX3 from Mycobacterium bovis (strain ATCC BAA-935 / AF2122/97).